A 331-amino-acid polypeptide reads, in one-letter code: Glucokinase (331 aa).

ATP is bound at residue 16 to 21; sequence GDIGGT.

This sequence belongs to the bacterial glucokinase family.

The protein resides in the cytoplasm. It catalyses the reaction D-glucose + ATP = D-glucose 6-phosphate + ADP + H(+). The protein is Glucokinase of Pseudomonas aeruginosa (strain LESB58).